A 1322-amino-acid polypeptide reads, in one-letter code: Mediator of RNA polymerase II transcription subunit 12 (1322 aa).

The interval 1–21 (MSPSKYLLTPPEELHPLTDSN) is disordered.

It belongs to the Mediator complex subunit 12 family. As to quaternary structure, component of the SRB8-11 complex, which itself associates with the Mediator complex.

It localises to the nucleus. Functionally, component of the SRB8-11 complex. The SRB8-11 complex is a regulatory module of the Mediator complex which is itself involved in regulation of basal and activated RNA polymerase II-dependent transcription. The SRB8-11 complex may be involved in the transcriptional repression of a subset of genes regulated by Mediator. It may inhibit the association of the Mediator complex with RNA polymerase II to form the holoenzyme complex. In Kluyveromyces lactis (strain ATCC 8585 / CBS 2359 / DSM 70799 / NBRC 1267 / NRRL Y-1140 / WM37) (Yeast), this protein is Mediator of RNA polymerase II transcription subunit 12 (SRB8).